The primary structure comprises 308 residues: Ycf92-like protein (308 aa).

Helical transmembrane passes span 41–61 (FANN…TLIA), 75–95 (LLTL…GLGV), 153–173 (ISTI…TTAP), 192–212 (IPVT…PLVL), and 288–308 (WLAI…GNQI).

It belongs to the ycf92 family.

Its subcellular location is the membrane. In Nostoc sp. (strain PCC 7120 / SAG 25.82 / UTEX 2576), this protein is Ycf92-like protein.